Consider the following 184-residue polypeptide: MASSMMSNAATAVAVAATSGGAQANMVAPFNGLKSIASFPVTRKSNDITSIASNGGRVQCMQVWPPVGKKKFETLSYLPPLSDAQLLAQVQYLLNKGWIPCIEFELEHPFVYRENHRSPGYQDGRYWTMWKLPMYGCTDPAQVLNEVEEAKKAYPTAFIRIIGFDNKRQVQCVSFIAYKPADSY.

Residues 1–59 constitute a chloroplast transit peptide; sequence MASSMMSNAATAVAVAATSGGAQANMVAPFNGLKSIASFPVTRKSNDITSIASNGGRVQ.

Belongs to the RuBisCO small chain family. As to quaternary structure, heterohexadecamer of 8 large and 8 small subunits.

The protein resides in the plastid. It is found in the chloroplast. RuBisCO catalyzes two reactions: the carboxylation of D-ribulose 1,5-bisphosphate, the primary event in carbon dioxide fixation, as well as the oxidative fragmentation of the pentose substrate. Both reactions occur simultaneously and in competition at the same active site. Although the small subunit is not catalytic it is essential for maximal activity. This is Ribulose bisphosphate carboxylase small subunit, chloroplastic 2 from Amaranthus hypochondriacus (Prince-of-Wales feather).